The chain runs to 769 residues: Serine protease HtrA-like (769 aa).

Residues 1–20 (MDIGKKHVIPKSQYRRKRRE) show a composition bias toward basic residues. Residues 1–390 (MDIGKKHVIP…ATSKLNKGRA (390 aa)) are disordered. Composition is skewed to basic and acidic residues over residues 21–64 (FFHN…ERFK) and 71–108 (LEQRNRDVNENKAEESKSNQDSKSAYNRDHYLTDDVSK). Positions 126–137 (YEQNSEATLSTK) are enriched in polar residues. Residues 138 to 186 (STDKVESTEMRKLSSDKNKVGHEEQHVLSKPSEHDKETRIDSESSRTDS) show a composition bias toward basic and acidic residues. Residues 247 to 262 (QQSQNEQTKTYTYGDS) are compositionally biased toward polar residues. Basic and acidic residues-rich tracts occupy residues 264–296 (QNDKSNHENDLSHHIPSISDDKDNVMRENHIVD) and 310–330 (KTDDDRKLDEKIHVEDKHKQN). Positions 331-347 (ADSSETVGYQSQSTASH) are enriched in polar residues. Over residues 348–364 (RSTEKRNISINDHDKLN) the composition is skewed to basic and acidic residues. The span at 365–390 (GQKTNTKTSANNNQKKATSKLNKGRA) shows a compositional bias: polar residues. A helical transmembrane segment spans residues 410–430 (LVILMGIIILIVILNAIFNNV). Catalysis depends on charge relay system residues H504, D534, and S619. The PDZ domain occupies 680–733 (IASLNSFERQAVKLPGKVKNGVVVDQVDNNGLADQSGLKKGDVITELDGKLLED).

This sequence belongs to the peptidase S1C family.

It localises to the cell membrane. This chain is Serine protease HtrA-like, found in Staphylococcus aureus (strain USA300).